A 397-amino-acid polypeptide reads, in one-letter code: Nickel-cobalt-cadmium resistance protein NccB (397 aa).

The chain crosses the membrane as a helical span at residues 10–30 (PSWPMIAGVAAAAALVGFGAA). Positions 137–195 (EAAAMAAERKVAQARADLARKTYERESSLFQQGVTPRQEMESARIALDVAQAEVQRAAT) form a coiled coil.

It belongs to the membrane fusion protein (MFP) (TC 8.A.1) family.

The protein localises to the cell inner membrane. Its function is as follows. Component of the NCC cation efflux system that confers resistance to nickel, cobalt and cadmium. The chain is Nickel-cobalt-cadmium resistance protein NccB (nccB) from Alcaligenes xylosoxydans xylosoxydans (Achromobacter xylosoxidans).